Here is a 439-residue protein sequence, read N- to C-terminus: 3-phosphoshikimate 1-carboxyvinyltransferase (439 aa).

3-phosphoshikimate-binding residues include K25, S26, and R30. K25 lines the phosphoenolpyruvate pocket. The phosphoenolpyruvate site is built by G96 and R124. 3-phosphoshikimate-binding residues include S170, S171, Q172, S202, D324, and K351. Q172 is a phosphoenolpyruvate binding site. D324 serves as the catalytic Proton acceptor. Residues R355, R399, and K424 each contribute to the phosphoenolpyruvate site.

This sequence belongs to the EPSP synthase family. As to quaternary structure, monomer.

The protein resides in the cytoplasm. The enzyme catalyses 3-phosphoshikimate + phosphoenolpyruvate = 5-O-(1-carboxyvinyl)-3-phosphoshikimate + phosphate. It participates in metabolic intermediate biosynthesis; chorismate biosynthesis; chorismate from D-erythrose 4-phosphate and phosphoenolpyruvate: step 6/7. Functionally, catalyzes the transfer of the enolpyruvyl moiety of phosphoenolpyruvate (PEP) to the 5-hydroxyl of shikimate-3-phosphate (S3P) to produce enolpyruvyl shikimate-3-phosphate and inorganic phosphate. The sequence is that of 3-phosphoshikimate 1-carboxyvinyltransferase from Bordetella avium (strain 197N).